A 274-amino-acid polypeptide reads, in one-letter code: Diaminopimelate epimerase (274 aa).

The substrate site is built by asparagine 11 and asparagine 62. Cysteine 71 (proton donor) is an active-site residue. Substrate contacts are provided by residues 72 to 73, asparagine 157, asparagine 190, and 208 to 209; these read GN and ER. Cysteine 217 acts as the Proton acceptor in catalysis. 218–219 contributes to the substrate binding site; the sequence is GT.

The protein belongs to the diaminopimelate epimerase family. In terms of assembly, homodimer.

The protein resides in the cytoplasm. It carries out the reaction (2S,6S)-2,6-diaminopimelate = meso-2,6-diaminopimelate. Its pathway is amino-acid biosynthesis; L-lysine biosynthesis via DAP pathway; DL-2,6-diaminopimelate from LL-2,6-diaminopimelate: step 1/1. Catalyzes the stereoinversion of LL-2,6-diaminopimelate (L,L-DAP) to meso-diaminopimelate (meso-DAP), a precursor of L-lysine and an essential component of the bacterial peptidoglycan. The sequence is that of Diaminopimelate epimerase from Elusimicrobium minutum (strain Pei191).